The sequence spans 212 residues: EFC-associated protein OPG053 (212 aa).

Residues 1–175 (MAETKEFKTL…IIENRLPYYD (175 aa)) are Virion surface-facing. 3 cysteine pairs are disulfide-bonded: C33–C55, C47–C127, and C107–C149. Residues 176 to 196 (PWFLVGVAIILVIFTVAICSI) traverse the membrane as a helical segment. Residues 197 to 212 (RRNLALKYRYGTFLYV) are Intravirion-facing.

Belongs to the orthopoxvirus OPG053 family. As to quaternary structure, component of the entry fusion complex (EFC) composed of OPG053, OPG076, OPG086, OPG094, OPG095, OPG099, OPG107, OPG143, OPG104, OPG147 and OPG155. Except for OPG095 and OPG052, each of the EFC proteins is required for assembly or stability of the complex. In terms of processing, disulfid bonds are oxidized in the cytoplasm by OPG088 protein. Unglycosylated because produced in viral factories instead of the classic ER -Golgi route.

Its subcellular location is the virion membrane. In terms of biological role, component of the entry fusion complex (EFC), which consists of 11 proteins. During cell infection, this complex mediates entry of the virion core into the host cytoplasm by a two-step mechanism consisting of lipid mixing of the viral and cellular membranes and subsequent pore formation. The sequence is that of EFC-associated protein OPG053 (OPG053) from Homo sapiens (Human).